Reading from the N-terminus, the 519-residue chain is Cytochrome P450 CYP99A1 (519 aa).

A heme-binding site is contributed by cysteine 453.

This sequence belongs to the cytochrome P450 family. Heme serves as cofactor.

It localises to the membrane. This chain is Cytochrome P450 CYP99A1 (CYP99A1), found in Sorghum bicolor (Sorghum).